The sequence spans 128 residues: Sulfurtransferase TusD (128 aa).

Catalysis depends on Cys-78, which acts as the Cysteine persulfide intermediate.

Belongs to the DsrE/TusD family. Heterohexamer, formed by a dimer of trimers. The hexameric TusBCD complex contains 2 copies each of TusB, TusC and TusD. The TusBCD complex interacts with TusE.

The protein localises to the cytoplasm. Part of a sulfur-relay system required for 2-thiolation of 5-methylaminomethyl-2-thiouridine (mnm(5)s(2)U) at tRNA wobble positions. Accepts sulfur from TusA and transfers it in turn to TusE. The chain is Sulfurtransferase TusD from Klebsiella pneumoniae subsp. pneumoniae (strain ATCC 700721 / MGH 78578).